Consider the following 703-residue polypeptide: Phenylalanine aminomutase (L-beta-phenylalanine forming) (703 aa).

Y79 functions as the Proton donor/acceptor in the catalytic mechanism. Residues 177-179 (ASG) constitute a cross-link (5-imidazolinone (Ala-Gly)). Position 178 is a 2,3-didehydroalanine (Ser) (S178).

The protein belongs to the PAL/histidase family. Post-translationally, contains an active site 4-methylidene-imidazol-5-one (MIO), which is formed autocatalytically by cyclization and dehydration of residues Ala-Ser-Gly.

The catalysed reaction is L-phenylalanine = L-beta-phenylalanine. The protein operates within mycotoxin biosynthesis. In terms of biological role, phenylalanine aminomutase; part of the gene cluster that mediates the biosynthesis of the mycotoxin cyclochlorotine, a hepatotoxic and carcinogenic cyclic chlorinated pentapeptide. Within the pathway, cctP1 provides the uncommon building block beta-Phe from Phe. The NRPS cctN initially catalyzes the condensation of L-serine (Ser), Pro, L-2-aminobutyrate (2Abu), Ser, and beta-Phe in this order to produce isocyclotine. After the dichlorination of Pro2 catalyzed by cctP2 to produce isocyclochlorotine, the cctO-mediated transacylation of isocyclochlorotine can furnish cyclochlorotine. The subsequent hydroxylation of cyclochlorotine by cctR yields hydroxycyclochlorotine as the final product. CctP1 probably acts as a phenylalanine aminomutase and provides the uncommon building block beta-Phe. Furthermore, 2Abu can be synthesized from threonine by one of the threonine dehydratases and transaminases localized outside of the cluster. The functions of the remaining proteins encoded by the cluster, cctM and cctT, have not been identified yet. This is Phenylalanine aminomutase (L-beta-phenylalanine forming) from Talaromyces islandicus (Penicillium islandicum).